Reading from the N-terminus, the 122-residue chain is Large ribosomal subunit protein uL14 (122 aa).

The protein belongs to the universal ribosomal protein uL14 family. In terms of assembly, part of the 50S ribosomal subunit. Forms a cluster with proteins L3 and L19. In the 70S ribosome, L14 and L19 interact and together make contacts with the 16S rRNA in bridges B5 and B8.

Its function is as follows. Binds to 23S rRNA. Forms part of two intersubunit bridges in the 70S ribosome. The polypeptide is Large ribosomal subunit protein uL14 (Citrifermentans bemidjiense (strain ATCC BAA-1014 / DSM 16622 / JCM 12645 / Bem) (Geobacter bemidjiensis)).